We begin with the raw amino-acid sequence, 51 residues long: DNA-directed RNA polymerases II, IV and V subunit 12 (51 aa).

Cys12, Cys15, Cys29, and Cys32 together coordinate Zn(2+).

This sequence belongs to the archaeal Rpo12/eukaryotic RPC10 RNA polymerase subunit family. As to quaternary structure, component of the RNA polymerase II, IV and V complexes. Associates with the mediator complex. Interacts with NRPD1.

The protein resides in the nucleus. In terms of biological role, DNA-dependent RNA polymerase catalyzes the transcription of DNA into RNA using the four ribonucleoside triphosphates as substrates. Component of RNA polymerase II which synthesizes mRNA precursors and many functional non-coding RNAs. Pol II is the central component of the basal RNA polymerase II transcription machinery. It is composed of mobile elements that move relative to each other. Component of RNA polymerases IV and V which mediate short-interfering RNAs (siRNA) accumulation and subsequent RNA-directed DNA methylation-dependent (RdDM) transcriptional gene silencing (TGS) of endogenous repeated sequences, including transposable elements. In Arabidopsis thaliana (Mouse-ear cress), this protein is DNA-directed RNA polymerases II, IV and V subunit 12 (NRPB12).